We begin with the raw amino-acid sequence, 208 residues long: Uracil phosphoribosyltransferase (208 aa).

5-phospho-alpha-D-ribose 1-diphosphate is bound by residues Arg-78, Arg-103, and 130–138 (DPMLATGGS). Residues Ile-193 and 198-200 (GDA) each bind uracil. Asp-199 provides a ligand contact to 5-phospho-alpha-D-ribose 1-diphosphate.

It belongs to the UPRTase family. Mg(2+) is required as a cofactor.

The enzyme catalyses UMP + diphosphate = 5-phospho-alpha-D-ribose 1-diphosphate + uracil. It functions in the pathway pyrimidine metabolism; UMP biosynthesis via salvage pathway; UMP from uracil: step 1/1. With respect to regulation, allosterically activated by GTP. In terms of biological role, catalyzes the conversion of uracil and 5-phospho-alpha-D-ribose 1-diphosphate (PRPP) to UMP and diphosphate. This Wolinella succinogenes (strain ATCC 29543 / DSM 1740 / CCUG 13145 / JCM 31913 / LMG 7466 / NCTC 11488 / FDC 602W) (Vibrio succinogenes) protein is Uracil phosphoribosyltransferase.